Here is a 325-residue protein sequence, read N- to C-terminus: Acetyl-coenzyme A carboxylase carboxyl transferase subunit alpha (325 aa).

In terms of domain architecture, CoA carboxyltransferase C-terminal spans 38 to 292 (KLEKRLHALE…DQVLEKSLKQ (255 aa)).

This sequence belongs to the AccA family. In terms of assembly, acetyl-CoA carboxylase is a heterohexamer composed of biotin carboxyl carrier protein (AccB), biotin carboxylase (AccC) and two subunits each of ACCase subunit alpha (AccA) and ACCase subunit beta (AccD).

Its subcellular location is the cytoplasm. The enzyme catalyses N(6)-carboxybiotinyl-L-lysyl-[protein] + acetyl-CoA = N(6)-biotinyl-L-lysyl-[protein] + malonyl-CoA. The protein operates within lipid metabolism; malonyl-CoA biosynthesis; malonyl-CoA from acetyl-CoA: step 1/1. Its function is as follows. Component of the acetyl coenzyme A carboxylase (ACC) complex. First, biotin carboxylase catalyzes the carboxylation of biotin on its carrier protein (BCCP) and then the CO(2) group is transferred by the carboxyltransferase to acetyl-CoA to form malonyl-CoA. This Halalkalibacterium halodurans (strain ATCC BAA-125 / DSM 18197 / FERM 7344 / JCM 9153 / C-125) (Bacillus halodurans) protein is Acetyl-coenzyme A carboxylase carboxyl transferase subunit alpha.